A 443-amino-acid chain; its full sequence is Xaa-Pro dipeptidase (443 aa).

The Mn(2+) site is built by D246, D257, H339, E384, and E423.

This sequence belongs to the peptidase M24B family. Bacterial-type prolidase subfamily. It depends on Mn(2+) as a cofactor.

The enzyme catalyses Xaa-L-Pro dipeptide + H2O = an L-alpha-amino acid + L-proline. Splits dipeptides with a prolyl residue in the C-terminal position. The chain is Xaa-Pro dipeptidase from Shigella boydii serotype 18 (strain CDC 3083-94 / BS512).